The primary structure comprises 419 residues: UDP-N-acetylglucosamine 1-carboxyvinyltransferase (419 aa).

Position 22–23 (22–23 (KN)) interacts with phosphoenolpyruvate. Arg92 lines the UDP-N-acetyl-alpha-D-glucosamine pocket. Residue Cys116 is the Proton donor of the active site. At Cys116 the chain carries 2-(S-cysteinyl)pyruvic acid O-phosphothioketal. UDP-N-acetyl-alpha-D-glucosamine is bound by residues 121-125 (RPIDL), Asp306, and Ile328.

Belongs to the EPSP synthase family. MurA subfamily.

It localises to the cytoplasm. The catalysed reaction is phosphoenolpyruvate + UDP-N-acetyl-alpha-D-glucosamine = UDP-N-acetyl-3-O-(1-carboxyvinyl)-alpha-D-glucosamine + phosphate. Its pathway is cell wall biogenesis; peptidoglycan biosynthesis. Functionally, cell wall formation. Adds enolpyruvyl to UDP-N-acetylglucosamine. Target for the antibiotic fosfomycin. Involved in heteroresistance to antibiotic fosfomycin. Heteroresistance is the ability of a clonal population to grow one or several subpopulations at a frequency of 10(-7) to 10(-3) in the presence of a higher antibiotic concentration than that predicted to be effective by measurement of the minimum inhibitory concentration (MIC). The chain is UDP-N-acetylglucosamine 1-carboxyvinyltransferase from Streptococcus pneumoniae serotype 2 (strain D39 / NCTC 7466).